The primary structure comprises 225 residues: Ribonuclease HII (225 aa).

The 209-residue stretch at 2 to 210 (GIVVGVDEAG…VRKLGGPWRS (209 aa)) folds into the RNase H type-2 domain. 3 residues coordinate a divalent metal cation: aspartate 8, glutamate 9, and aspartate 107.

This sequence belongs to the RNase HII family. The cofactor is Mn(2+). Mg(2+) is required as a cofactor.

It is found in the cytoplasm. It catalyses the reaction Endonucleolytic cleavage to 5'-phosphomonoester.. In terms of biological role, endonuclease that specifically degrades the RNA of RNA-DNA hybrids. The protein is Ribonuclease HII (rnhB) of Aeropyrum pernix (strain ATCC 700893 / DSM 11879 / JCM 9820 / NBRC 100138 / K1).